We begin with the raw amino-acid sequence, 133 residues long: UPF0102 protein Fnod_1509 (133 aa).

Belongs to the UPF0102 family.

The protein is UPF0102 protein Fnod_1509 of Fervidobacterium nodosum (strain ATCC 35602 / DSM 5306 / Rt17-B1).